We begin with the raw amino-acid sequence, 314 residues long: Large ribosomal subunit protein uL10 (314 aa).

The tract at residues 281 to 314 (GSTQETPEEKKEEAKKEEKSPDESISEGLGALFQ) is disordered. A compositionally biased stretch (basic and acidic residues) spans 287-302 (PEEKKEEAKKEEKSPD).

This sequence belongs to the universal ribosomal protein uL10 family. In terms of assembly, part of the 50S ribosomal subunit. Forms part of the ribosomal stalk which helps the ribosome interact with GTP-bound translation factors. Forms a heptameric L10(L12)2(L12)2(L12)2 complex, where L10 forms an elongated spine to which the L12 dimers bind in a sequential fashion.

In terms of biological role, forms part of the ribosomal stalk, playing a central role in the interaction of the ribosome with GTP-bound translation factors. This Thermoplasma acidophilum (strain ATCC 25905 / DSM 1728 / JCM 9062 / NBRC 15155 / AMRC-C165) protein is Large ribosomal subunit protein uL10.